We begin with the raw amino-acid sequence, 200 residues long: Small ribosomal subunit protein uS4 (200 aa).

A disordered region spans residues 22–43 (TGKELERRPYAPGQHGPTQRKK). One can recognise an S4 RNA-binding domain in the interval 92 to 170 (QRLDNIVYRL…VPEYVTFDAE (79 aa)).

It belongs to the universal ribosomal protein uS4 family. As to quaternary structure, part of the 30S ribosomal subunit. Contacts protein S5. The interaction surface between S4 and S5 is involved in control of translational fidelity.

In terms of biological role, one of the primary rRNA binding proteins, it binds directly to 16S rRNA where it nucleates assembly of the body of the 30S subunit. Its function is as follows. With S5 and S12 plays an important role in translational accuracy. The protein is Small ribosomal subunit protein uS4 of Listeria welshimeri serovar 6b (strain ATCC 35897 / DSM 20650 / CCUG 15529 / CIP 8149 / NCTC 11857 / SLCC 5334 / V8).